The sequence spans 392 residues: Telomere-binding protein subunit beta (392 aa).

A disordered region spans residues 234-392 (QQVESVQVQP…ASKASKRSKK (159 aa)). Basic residues predominate over residues 247-256 (GGAKGKKKAA). Over residues 257-268 (TKSATKKTVAAK) the composition is skewed to low complexity. Residues 269–284 (KTAESADVRKSVDKIV) show a composition bias toward basic and acidic residues. Positions 328–343 (SPSGKKSTKTTDQMTM) are enriched in polar residues. Over residues 374 to 384 (GKASATSGKAS) the composition is skewed to low complexity.

As to quaternary structure, heterodimer of an alpha and a beta subunit.

It is found in the nucleus. It localises to the chromosome. The protein resides in the telomere. Functionally, may function as protective capping of the single-stranded telomeric overhang. May also participate in telomere length regulation during DNA replication. The polypeptide is Telomere-binding protein subunit beta (STY43) (Stylonychia mytilus (Ciliate)).